Reading from the N-terminus, the 150-residue chain is Large ribosomal subunit protein uL15 (150 aa).

Positions 12–43 are disordered; that stretch reads AKKRKKRVGCGESSGHGKTSGRGHKGQKARAG. A compositionally biased stretch (basic residues) spans 30 to 39; the sequence is TSGRGHKGQK.

It belongs to the universal ribosomal protein uL15 family. Part of the 50S ribosomal subunit.

In terms of biological role, binds to the 23S rRNA. This Methylacidiphilum infernorum (isolate V4) (Methylokorus infernorum (strain V4)) protein is Large ribosomal subunit protein uL15.